The chain runs to 161 residues: Nucleotide-binding protein azo2183 (161 aa).

This sequence belongs to the YajQ family.

Functionally, nucleotide-binding protein. The protein is Nucleotide-binding protein azo2183 of Azoarcus sp. (strain BH72).